The sequence spans 398 residues: Nicotinate phosphoribosyltransferase (398 aa).

Histidine 222 carries the post-translational modification Phosphohistidine; by autocatalysis.

This sequence belongs to the NAPRTase family. Transiently phosphorylated on a His residue during the reaction cycle. Phosphorylation strongly increases the affinity for substrates and increases the rate of nicotinate D-ribonucleotide production. Dephosphorylation regenerates the low-affinity form of the enzyme, leading to product release.

The enzyme catalyses nicotinate + 5-phospho-alpha-D-ribose 1-diphosphate + ATP + H2O = nicotinate beta-D-ribonucleotide + ADP + phosphate + diphosphate. It participates in cofactor biosynthesis; NAD(+) biosynthesis; nicotinate D-ribonucleotide from nicotinate: step 1/1. In terms of biological role, catalyzes the synthesis of beta-nicotinate D-ribonucleotide from nicotinate and 5-phospho-D-ribose 1-phosphate at the expense of ATP. This chain is Nicotinate phosphoribosyltransferase, found in Acidovorax ebreus (strain TPSY) (Diaphorobacter sp. (strain TPSY)).